Reading from the N-terminus, the 401-residue chain is Enolase (401 aa).

Gln154 serves as a coordination point for (2R)-2-phosphoglycerate. Glu196 functions as the Proton donor in the catalytic mechanism. Positions 232, 275, and 302 each coordinate Mg(2+). (2R)-2-phosphoglycerate is bound by residues Lys327, Arg356, Ser357, and Lys378. Residue Lys327 is the Proton acceptor of the active site.

Belongs to the enolase family. Mg(2+) serves as cofactor.

It is found in the cytoplasm. The protein localises to the secreted. Its subcellular location is the cell surface. The catalysed reaction is (2R)-2-phosphoglycerate = phosphoenolpyruvate + H2O. It participates in carbohydrate degradation; glycolysis; pyruvate from D-glyceraldehyde 3-phosphate: step 4/5. In terms of biological role, catalyzes the reversible conversion of 2-phosphoglycerate (2-PG) into phosphoenolpyruvate (PEP). It is essential for the degradation of carbohydrates via glycolysis. This Haloarcula marismortui (strain ATCC 43049 / DSM 3752 / JCM 8966 / VKM B-1809) (Halobacterium marismortui) protein is Enolase.